A 605-amino-acid chain; its full sequence is Sulfite reductase [NADPH] flavoprotein alpha-component (605 aa).

The region spanning 68-206 (VTVLYGSQTG…PAAEWLEGVL (139 aa)) is the Flavodoxin-like domain. FMN contacts are provided by residues 74 to 78 (SQTGN), 121 to 126 (STHGEG), and 154 to 185 (VLAL…KRIS). Residues 213–234 (GGGSAAPAPAAASQTGESSYSR) form a disordered region. In terms of domain architecture, FAD-binding FR-type spans 235–454 (TNPFRAEVLE…VQHNQNFKLP (220 aa)). 392-395 (RLYS) is an FAD binding site. NADP(+) contacts are provided by residues D495 and 525–533 (SRDTEEKVY).

As to quaternary structure, alpha(8)-beta(8). The alpha component is a flavoprotein, the beta component is a hemoprotein. Requires FAD as cofactor. FMN serves as cofactor.

It carries out the reaction hydrogen sulfide + 3 NADP(+) + 3 H2O = sulfite + 3 NADPH + 4 H(+). The protein operates within sulfur metabolism; hydrogen sulfide biosynthesis; hydrogen sulfide from sulfite (NADPH route): step 1/1. Component of the sulfite reductase complex that catalyzes the 6-electron reduction of sulfite to sulfide. This is one of several activities required for the biosynthesis of L-cysteine from sulfate. The flavoprotein component catalyzes the electron flow from NADPH -&gt; FAD -&gt; FMN to the hemoprotein component. This is Sulfite reductase [NADPH] flavoprotein alpha-component (cysJ) from Bacillus subtilis (strain 168).